The chain runs to 347 residues: Cannabinoid receptor 2 (347 aa).

The Extracellular portion of the chain corresponds to 1–33; sequence MEGCRETEVTNGSNGGLEFNPMKEYMILSSGQQ. N11 is a glycosylation site (N-linked (GlcNAc...) asparagine). Residues 34-59 form a helical membrane-spanning segment; it reads IAVAVLCTLMGLLSALENMAVLYIIL. At 60–71 the chain is on the cytoplasmic side; sequence SSRRLRRKPSYL. The chain crosses the membrane as a helical span at residues 72 to 92; the sequence is FISSLAGADFLASVIFACNFV. Topologically, residues 93 to 104 are extracellular; sequence IFHVFHGVDSNA. A helical membrane pass occupies residues 105-129; it reads IFLLKIGSVTMTFTASVGSLLLTAV. Topologically, residues 130 to 149 are cytoplasmic; sequence DRYLCLCYPPTYKALVTRGR. Residues 150–172 traverse the membrane as a helical segment; it reads ALVALCVMWVLSALISYLPLMGW. Residues 173–188 lie on the Extracellular side of the membrane; the sequence is TCCPSPCSELFPLIPN. A helical transmembrane segment spans residues 189-214; sequence DYLLGWLLFIAILFSGIIYTYGYVLW. Topologically, residues 215–246 are cytoplasmic; sequence KAHRHVATLAEHQDRQVPGIARMRLDVRLAKT. Residues 247 to 267 form a helical membrane-spanning segment; sequence LGLVLAVLLICWFPALALMGH. Over 268–279 the chain is Extracellular; the sequence is SLVTTLSDQVKE. The chain crosses the membrane as a helical span at residues 280-301; it reads AFAFCSMLCLVNSMVNPIIYAL. Topologically, residues 302-347 are cytoplasmic; it reads RSGEIRSAAQHCLIGWKKYLQGLGPEGKEEGPRSSVTETEADVKTT. A disordered region spans residues 326–347; the sequence is PEGKEEGPRSSVTETEADVKTT. A phosphoserine mark is found at S335 and S336. A Phosphothreonine modification is found at T338.

Belongs to the G-protein coupled receptor 1 family. In terms of tissue distribution, expressed by cells of hematopoietic origin. Expressed in skin in suprabasal layers and hair follicles, in brain by neurons and glial cells and by osteoblasts, osteocytes, osteoclasts (at protein level).

The protein resides in the cell membrane. It is found in the cell projection. The protein localises to the dendrite. Its subcellular location is the perikaryon. In terms of biological role, heterotrimeric G protein-coupled receptor for endocannabinoid 2-arachidonoylglycerol mediating inhibition of adenylate cyclase. May function in inflammatory response, nociceptive transmission and bone homeostasis. The sequence is that of Cannabinoid receptor 2 (Cnr2) from Mus musculus (Mouse).